Reading from the N-terminus, the 801-residue chain is Na(+)/H(+) antiporter subunit A1 (801 aa).

Helical transmembrane passes span 1–21 (MSLLHIAVLLPLIFALIIPFL), 30–50 (LGWFVLPVPIVLFIYFISLIS), 79–99 (LGLLFSLLITGIGSLVVLYSI), 117–137 (LFMGAMLGVVLSDNFIILYLF), 166–186 (LIITVLGGLSMLGGIILLSLA), 206–226 (PFFILVMILFMIGAFTKSAQV), 228–250 (FYIWLPDAMEAPTPVSAYLHSAT), 265–285 (IFAISEGWVWTITLVGLITLF), 300–320 (ILAFSTVSQLGMIMSMLGIGA), 337–357 (FVAAIFHLINHATFKGALFMI), 373–393 (LGGLLTIMPISFTLTVITTLS), 427–447 (LGILLPIIAIIGSIFTFVYSI), 472–492 (ILMLISPIILTSLVIVFGLFP), 522–542 (GITPAFLSTIGIYIIGILLLI), 591–611 (LVIILGILIALTFVTVISVPF), 623–643 (VFEGATVLFLLIASTFIIFAK), 646–666 (LFSIIMLSAVGYAISVLFIFF), 671–691 (LALTQFVVESISTALFLLCFY), 707–727 (LTNAVISIGVGLSVIILGLIG), and 764–784 (MDTLFESSVLGIAGLGVYTMI).

It belongs to the CPA3 antiporters (TC 2.A.63) subunit A family. In terms of assembly, may form a heterooligomeric complex that consists of seven subunits: mnhA1, mnhB1, mnhC1, mnhD1, mnhE1, mnhF1 and mnhG1.

It localises to the cell membrane. In terms of biological role, mnh complex is a Na(+)/H(+) antiporter involved in Na(+) excretion. This Staphylococcus epidermidis (strain ATCC 35984 / DSM 28319 / BCRC 17069 / CCUG 31568 / BM 3577 / RP62A) protein is Na(+)/H(+) antiporter subunit A1 (mnhA1).